The sequence spans 162 residues: NADH-quinone oxidoreductase subunit I (162 aa).

2 consecutive 4Fe-4S ferredoxin-type domains span residues 53 to 83 (LRRYANGEERCIACKLCEAICPAQAITIEAE) and 93 to 122 (TRYDIDMTKCIYCGYCQEACPVDAIVEGPN). Residues Cys63, Cys66, Cys69, Cys73, Cys102, Cys105, Cys108, and Cys112 each contribute to the [4Fe-4S] cluster site.

It belongs to the complex I 23 kDa subunit family. NDH-1 is composed of 14 different subunits. Subunits NuoA, H, J, K, L, M, N constitute the membrane sector of the complex. Requires [4Fe-4S] cluster as cofactor.

Its subcellular location is the cell inner membrane. The catalysed reaction is a quinone + NADH + 5 H(+)(in) = a quinol + NAD(+) + 4 H(+)(out). NDH-1 shuttles electrons from NADH, via FMN and iron-sulfur (Fe-S) centers, to quinones in the respiratory chain. The immediate electron acceptor for the enzyme in this species is believed to be ubiquinone. Couples the redox reaction to proton translocation (for every two electrons transferred, four hydrogen ions are translocated across the cytoplasmic membrane), and thus conserves the redox energy in a proton gradient. This chain is NADH-quinone oxidoreductase subunit I, found in Maricaulis maris (strain MCS10) (Caulobacter maris).